The chain runs to 156 residues: Ribosomal RNA large subunit methyltransferase H (156 aa).

S-adenosyl-L-methionine is bound by residues L72, G104, and L123–F128.

It belongs to the RNA methyltransferase RlmH family. In terms of assembly, homodimer.

Its subcellular location is the cytoplasm. The catalysed reaction is pseudouridine(1915) in 23S rRNA + S-adenosyl-L-methionine = N(3)-methylpseudouridine(1915) in 23S rRNA + S-adenosyl-L-homocysteine + H(+). Specifically methylates the pseudouridine at position 1915 (m3Psi1915) in 23S rRNA. The chain is Ribosomal RNA large subunit methyltransferase H from Nitratidesulfovibrio vulgaris (strain ATCC 29579 / DSM 644 / CCUG 34227 / NCIMB 8303 / VKM B-1760 / Hildenborough) (Desulfovibrio vulgaris).